A 431-amino-acid chain; its full sequence is Glutamate-1-semialdehyde 2,1-aminomutase 1 (431 aa).

An N6-(pyridoxal phosphate)lysine modification is found at lysine 268.

It belongs to the class-III pyridoxal-phosphate-dependent aminotransferase family. HemL subfamily. Homodimer. It depends on pyridoxal 5'-phosphate as a cofactor.

The protein resides in the cytoplasm. The enzyme catalyses (S)-4-amino-5-oxopentanoate = 5-aminolevulinate. Its pathway is porphyrin-containing compound metabolism; protoporphyrin-IX biosynthesis; 5-aminolevulinate from L-glutamyl-tRNA(Glu): step 2/2. This chain is Glutamate-1-semialdehyde 2,1-aminomutase 1, found in Bacillus pumilus (strain SAFR-032).